The sequence spans 395 residues: Synaptotagmin-8 (395 aa).

The Extracellular portion of the chain corresponds to 1-44 (MQADRSMKMGHVSNPLSTSAPVDATAGPNLIPDLITKIPWPRWI). Residues 45-65 (LFIAILAAGVLLVSCLLCVIC) traverse the membrane as a helical; Signal-anchor for type III membrane protein segment. The Cytoplasmic portion of the chain corresponds to 66–395 (YCCHRQRHRK…PRLPLLRPRS (330 aa)). C2 domains follow at residues 113 to 229 (PWGQ…ESWY) and 241 to 370 (QMGE…AQWH).

Belongs to the synaptotagmin family. Homodimer or homooligomer. Homodimerization and homooligomerization do not depend on Ca(2+). Interacts with SYNCRIP isoform 2 C-terminus. Binds inositol 1,3,4,5-tetrakisphosphate (IP4). Binds to AP2 in a Ca(2+)-independent manner. Interacts with STX1A, STX1B and STX2; the interaction is Ca(2+)-dependent. As to expression, ubiquitous. Strongly expressed in heart, kidney, cerebral cortex, pancreas, and many insulin-secreting cells; lower expression in spleen. Broadly distributed in kidney.

The protein localises to the cell membrane. The protein resides in the cytoplasmic vesicle. It is found in the secretory vesicle. It localises to the acrosome. Functionally, involved in the trafficking and exocytosis of secretory vesicles in non-neuronal tissues. Mediates Ca(2+)-regulation of exocytosis acrosomal reaction in sperm. May mediate Ca(2+)-regulation of exocytosis in insulin secreted cells. The sequence is that of Synaptotagmin-8 (Syt8) from Rattus norvegicus (Rat).